The primary structure comprises 634 residues: 1-deoxy-D-xylulose-5-phosphate synthase (634 aa).

Thiamine diphosphate contacts are provided by residues H77 and 118 to 120; that span reads GHA. Residue D149 coordinates Mg(2+). Thiamine diphosphate contacts are provided by residues 150-151, N178, Y289, and E371; that span reads AS. Residue N178 participates in Mg(2+) binding.

It belongs to the transketolase family. DXPS subfamily. In terms of assembly, homodimer. Requires Mg(2+) as cofactor. Thiamine diphosphate is required as a cofactor.

It carries out the reaction D-glyceraldehyde 3-phosphate + pyruvate + H(+) = 1-deoxy-D-xylulose 5-phosphate + CO2. Its pathway is metabolic intermediate biosynthesis; 1-deoxy-D-xylulose 5-phosphate biosynthesis; 1-deoxy-D-xylulose 5-phosphate from D-glyceraldehyde 3-phosphate and pyruvate: step 1/1. Catalyzes the acyloin condensation reaction between C atoms 2 and 3 of pyruvate and glyceraldehyde 3-phosphate to yield 1-deoxy-D-xylulose-5-phosphate (DXP). The chain is 1-deoxy-D-xylulose-5-phosphate synthase from Leptospira interrogans serogroup Icterohaemorrhagiae serovar copenhageni (strain Fiocruz L1-130).